We begin with the raw amino-acid sequence, 363 residues long: Trans-2,3-enoyl-CoA reductase-like (363 aa).

Serine 37 carries the phosphoserine modification. The next 3 membrane-spanning stretches (helical) occupy residues 143 to 163 (WTTVFLAEYTGPLLIYLLFYL), 217 to 237 (LIMSCAFYWGFTSWIAYYINH), and 311 to 331 (ISFTVMTQTLPVGIFTLLMSI).

The protein belongs to the steroid 5-alpha reductase family. As to expression, predominantly expressed in the heart and skeletal muscle.

The protein resides in the membrane. It is found in the endoplasmic reticulum. This is Trans-2,3-enoyl-CoA reductase-like (TECRL) from Homo sapiens (Human).